The following is a 63-amino-acid chain: Alpha-conotoxin-like PuSG1.1 (63 aa).

The N-terminal stretch at 1–21 is a signal peptide; it reads MRCLAFLVVTLLLFTATATTG. Residues 22–43 constitute a propeptide that is removed on maturation; sequence ASNGMNAAASGEAPDSISLAVR. Disulfide bonds link cysteine 46–cysteine 52 and cysteine 47–cysteine 60. The tract at residues 48-50 is lacks the Ser-Xaa-Pro motif that is crucial for potent interaction with nAChR; that stretch reads PDP.

The protein belongs to the conotoxin A superfamily. As to expression, expressed by the salivary gland.

It is found in the secreted. Alpha-conopeptides-like may act on postsynaptic membranes, they bind to the nicotinic acetylcholine receptors (nAChR) and thus inhibit them. Has possibly a distinct nAChR binding mode from other alpha-conotoxins, due to a different three residue motif (lacks the Ser-Xaa-Pro motif). This is Alpha-conotoxin-like PuSG1.1 from Conus pulicarius (Flea-bitten cone).